Consider the following 536-residue polypeptide: Atrial natriuretic peptide receptor 3 (536 aa).

The N-terminal stretch at 1–26 (MRSLLLFTFSACVLLARVLLAGGASS) is a signal peptide. Residues 27-40 (GAGDTRPGSRRRAR) constitute a propeptide that is removed on maturation. Over 41-478 (EALAAQKIEV…KSSGGLEESA (438 aa)) the chain is Extracellular. The N-linked (GlcNAc...) asparagine glycan is linked to N81. The chloride site is built by S101, V130, and C131. 2 disulfide bridges follow: C103–C131 and C208–C256. Residues N288 and N389 are each glycosylated (N-linked (GlcNAc...) asparagine). A helical membrane pass occupies residues 479–499 (VTGIVVGALLGAGLLMAFYFF). Residues 500-536 (RKKYRITIERRNQQEESNIGKHRELREDSIRSHFSVA) are Cytoplasmic-facing.

The protein belongs to the ANF receptor family. As to quaternary structure, homodimer; disulfide-linked. Interacts with OSTN.

Its subcellular location is the cell membrane. Functionally, receptor for the natriuretic peptide hormones, binding with similar affinities atrial natriuretic peptide NPPA/ANP, brain natriuretic peptide NPPB/BNP, and C-type natriuretic peptide NPPC/CNP. May function as a clearance receptor for NPPA, NPPB and NPPC, regulating their local concentrations and effects. Acts as a regulator of osteoblast differentiation and bone growth by binding to its ligand osteocrin, thereby preventing binding between NPR3/NPR-C and natriuretic peptides, leading to increase cGMP production. The polypeptide is Atrial natriuretic peptide receptor 3 (Npr3) (Mus musculus (Mouse)).